Consider the following 155-residue polypeptide: Ribonuclease H (155 aa).

Positions 4 to 145 (QQKVVEIYTD…ADALARKAIT (142 aa)) constitute an RNase H type-1 domain. Mg(2+) contacts are provided by D13, E51, D73, and D137.

This sequence belongs to the RNase H family. In terms of assembly, monomer. The cofactor is Mg(2+).

The protein localises to the cytoplasm. It carries out the reaction Endonucleolytic cleavage to 5'-phosphomonoester.. In terms of biological role, endonuclease that specifically degrades the RNA of RNA-DNA hybrids. The sequence is that of Ribonuclease H from Bartonella quintana (strain Toulouse) (Rochalimaea quintana).